Here is a 149-residue protein sequence, read N- to C-terminus: Myoglobin (149 aa).

The residue at position 2 (T2) is an N-acetylthreonine. The 142-residue stretch at 2 to 143 (TEWEHVNKVW…ICSDLETLYK (142 aa)) folds into the Globin domain. Residue H60 participates in nitrite binding. Residue H60 participates in O2 binding. H89 is a binding site for heme b.

This sequence belongs to the globin family. Monomeric.

The protein localises to the cytoplasm. The protein resides in the sarcoplasm. It catalyses the reaction Fe(III)-heme b-[protein] + nitric oxide + H2O = Fe(II)-heme b-[protein] + nitrite + 2 H(+). It carries out the reaction H2O2 + AH2 = A + 2 H2O. Monomeric heme protein which primary function is to store oxygen and facilitate its diffusion within muscle tissues. Reversibly binds oxygen through a pentacoordinated heme iron and enables its timely and efficient release as needed during periods of heightened demand. Depending on the oxidative conditions of tissues and cells, and in addition to its ability to bind oxygen, it also has a nitrite reductase activity whereby it regulates the production of bioactive nitric oxide. Under stress conditions, like hypoxia and anoxia, it also protects cells against reactive oxygen species thanks to its pseudoperoxidase activity. The sequence is that of Myoglobin (mb) from Heterodontus portusjacksoni (Port Jackson shark).